The following is a 465-amino-acid chain: Cysteine--tRNA ligase (465 aa).

C27 is a Zn(2+) binding site. The short motif at 29 to 39 (PTVYNFFHIGN) is the 'HIGH' region element. Residues C207, H232, and E236 each contribute to the Zn(2+) site. The short motif at 264 to 268 (KMSKS) is the 'KMSKS' region element. K267 is an ATP binding site.

The protein belongs to the class-I aminoacyl-tRNA synthetase family. Monomer. Zn(2+) is required as a cofactor.

It localises to the cytoplasm. It carries out the reaction tRNA(Cys) + L-cysteine + ATP = L-cysteinyl-tRNA(Cys) + AMP + diphosphate. The sequence is that of Cysteine--tRNA ligase from Clostridium botulinum (strain Loch Maree / Type A3).